A 466-amino-acid chain; its full sequence is Chromosomal replication initiator protein DnaA (466 aa).

Positions 1–86 are domain I, interacts with DnaA modulators; the sequence is MSLSLWQQCL…EVGTKPVTQT (86 aa). Residues 86 to 129 are domain II; sequence TLKTPVHNVVAPTQTTTAQPQRVAPAARSGWDNVPAPAEPTYRS. Positions 130–346 are domain III, AAA+ region; sequence NVNVKHTFDN…GALNRVIANA (217 aa). Residues glycine 174, glycine 176, lysine 177, and threonine 178 each contribute to the ATP site. The segment at 347–466 is domain IV, binds dsDNA; the sequence is NFTGRAITID…FSNLIRTLSS (120 aa).

It belongs to the DnaA family. In terms of assembly, oligomerizes as a right-handed, spiral filament on DNA at oriC.

It localises to the cytoplasm. Functionally, plays an essential role in the initiation and regulation of chromosomal replication. ATP-DnaA binds to the origin of replication (oriC) to initiate formation of the DNA replication initiation complex once per cell cycle. Binds the DnaA box (a 9 base pair repeat at the origin) and separates the double-stranded (ds)DNA. Forms a right-handed helical filament on oriC DNA; dsDNA binds to the exterior of the filament while single-stranded (ss)DNA is stabiized in the filament's interior. The ATP-DnaA-oriC complex binds and stabilizes one strand of the AT-rich DNA unwinding element (DUE), permitting loading of DNA polymerase. After initiation quickly degrades to an ADP-DnaA complex that is not apt for DNA replication. Binds acidic phospholipids. This chain is Chromosomal replication initiator protein DnaA, found in Salmonella enteritidis PT4 (strain P125109).